The sequence spans 179 residues: Large ribosomal subunit protein uL5 (179 aa).

The protein belongs to the universal ribosomal protein uL5 family. As to quaternary structure, part of the 50S ribosomal subunit; part of the 5S rRNA/L5/L18/L25 subcomplex. Contacts the 5S rRNA and the P site tRNA. Forms a bridge to the 30S subunit in the 70S ribosome.

In terms of biological role, this is one of the proteins that bind and probably mediate the attachment of the 5S RNA into the large ribosomal subunit, where it forms part of the central protuberance. In the 70S ribosome it contacts protein S13 of the 30S subunit (bridge B1b), connecting the 2 subunits; this bridge is implicated in subunit movement. Contacts the P site tRNA; the 5S rRNA and some of its associated proteins might help stabilize positioning of ribosome-bound tRNAs. In Clostridium perfringens (strain ATCC 13124 / DSM 756 / JCM 1290 / NCIMB 6125 / NCTC 8237 / Type A), this protein is Large ribosomal subunit protein uL5.